The following is a 106-amino-acid chain: Large ribosomal subunit protein uL24 (106 aa).

It belongs to the universal ribosomal protein uL24 family. In terms of assembly, part of the 50S ribosomal subunit.

One of two assembly initiator proteins, it binds directly to the 5'-end of the 23S rRNA, where it nucleates assembly of the 50S subunit. In terms of biological role, one of the proteins that surrounds the polypeptide exit tunnel on the outside of the subunit. The sequence is that of Large ribosomal subunit protein uL24 from Acinetobacter baylyi (strain ATCC 33305 / BD413 / ADP1).